The chain runs to 586 residues: Asparagine synthetase [glutamine-hydrolyzing] (586 aa).

C2 serves as the catalytic For GATase activity. The Glutamine amidotransferase type-2 domain maps to 2-185 (CGILAVLGVV…PGHLYSSKTG (184 aa)). L-glutamine is bound by residues 50-54 (RLAII), 75-77 (NGE), and D98. Positions 193–516 (PPWFSETVPS…PQDSARETVP (324 aa)) constitute an Asparagine synthetase domain. ATP contacts are provided by residues L231, I267, and 341 to 342 (SG).

The enzyme catalyses L-aspartate + L-glutamine + ATP + H2O = L-asparagine + L-glutamate + AMP + diphosphate + H(+). Its pathway is amino-acid biosynthesis; L-asparagine biosynthesis; L-asparagine from L-aspartate (L-Gln route): step 1/1. Its function is as follows. Essential for nitrogen assimilation, distribution and remobilization within the plant via the phloem. The chain is Asparagine synthetase [glutamine-hydrolyzing] (ASN1) from Zea mays (Maize).